Here is a 141-residue protein sequence, read N- to C-terminus: Large ribosomal subunit protein uL11 (141 aa).

The protein belongs to the universal ribosomal protein uL11 family. Part of the ribosomal stalk of the 50S ribosomal subunit. Interacts with L10 and the large rRNA to form the base of the stalk. L10 forms an elongated spine to which L12 dimers bind in a sequential fashion forming a multimeric L10(L12)X complex. In terms of processing, one or more lysine residues are methylated.

Its function is as follows. Forms part of the ribosomal stalk which helps the ribosome interact with GTP-bound translation factors. This Geobacillus sp. (strain WCH70) protein is Large ribosomal subunit protein uL11.